Reading from the N-terminus, the 523-residue chain is Glycerate kinase (523 aa).

S60 bears the Phosphoserine mark. K200 carries the post-translational modification N6-acetyllysine.

The protein belongs to the glycerate kinase type-2 family.

It localises to the cytoplasm. The catalysed reaction is (R)-glycerate + ATP = (2R)-3-phosphoglycerate + ADP + H(+). The sequence is that of Glycerate kinase (Glyctk) from Rattus norvegicus (Rat).